The sequence spans 330 residues: HPr kinase/phosphorylase (330 aa).

Residues His-153 and Lys-174 contribute to the active site. 168–175 is an ATP binding site; it reads GKSGLGKS. A Mg(2+)-binding site is contributed by Ser-175. Asp-192 acts as the Proton acceptor; for phosphorylation activity. Proton donor; for dephosphorylation activity in catalysis. Residues 217-226 form an important for the catalytic mechanism of both phosphorylation and dephosphorylation region; it reads MEIRGLGVVD. Residue Glu-218 coordinates Mg(2+). The active site involves Arg-259. Positions 280 to 285 are important for the catalytic mechanism of dephosphorylation; it reads PIFPGK.

The protein belongs to the HPrK/P family. In terms of assembly, homohexamer. The cofactor is Mg(2+).

It carries out the reaction [HPr protein]-L-serine + ATP = [HPr protein]-O-phospho-L-serine + ADP + H(+). The enzyme catalyses [HPr protein]-O-phospho-L-serine + phosphate + H(+) = [HPr protein]-L-serine + diphosphate. Functionally, catalyzes the ATP- as well as the pyrophosphate-dependent phosphorylation of a specific serine residue in HPr, a phosphocarrier protein of the phosphoenolpyruvate-dependent sugar phosphotransferase system (PTS). HprK/P also catalyzes the pyrophosphate-producing, inorganic phosphate-dependent dephosphorylation (phosphorolysis) of seryl-phosphorylated HPr (P-Ser-HPr). The sequence is that of HPr kinase/phosphorylase from Chlorobium limicola (strain DSM 245 / NBRC 103803 / 6330).